The primary structure comprises 414 residues: Glucose-1-phosphate adenylyltransferase (414 aa).

Alpha-D-glucose 1-phosphate is bound by residues Tyr99, Gly164, 181-182, and Ser199; that span reads EK.

Belongs to the bacterial/plant glucose-1-phosphate adenylyltransferase family. As to quaternary structure, homotetramer.

It catalyses the reaction alpha-D-glucose 1-phosphate + ATP + H(+) = ADP-alpha-D-glucose + diphosphate. It functions in the pathway glycan biosynthesis; glycogen biosynthesis. Its function is as follows. Involved in the biosynthesis of ADP-glucose, a building block required for the elongation reactions to produce glycogen. Catalyzes the reaction between ATP and alpha-D-glucose 1-phosphate (G1P) to produce pyrophosphate and ADP-Glc. The chain is Glucose-1-phosphate adenylyltransferase from Bifidobacterium adolescentis (strain ATCC 15703 / DSM 20083 / NCTC 11814 / E194a).